The sequence spans 568 residues: Zinc finger protein 768 (568 aa).

The segment covering 1–16 has biased composition (basic and acidic residues); sequence MEREASSWGLESRDVH. Disordered regions lie at residues 1–223, 228–247, and 264–287; these read MERE…SLGV, SFTQGFGEQPTGALPPFDMP, and LNLTGTLRGPGRRGGRARGGQGPR. Serine 17, serine 23, and serine 27 each carry phosphoserine. Threonine 35 carries the phosphothreonine modification. 13 positions are modified to phosphoserine: serine 36, serine 65, serine 72, serine 79, serine 86, serine 93, serine 100, serine 107, serine 114, serine 121, serine 128, serine 135, and serine 149. Low complexity predominate over residues 62 to 80; the sequence is EPQSPEFEPQSPEFESQSP. Positions 110 to 122 are enriched in polar residues; sequence SDPQSPEFESQSP. Tyrosine 152 carries the post-translational modification Phosphotyrosine. At serine 154 the chain carries Phosphoserine. The span at 159-186 shows a compositional bias: polar residues; the sequence is FESQSPGYESQSPGYEPQNSGDGVQNSE. A Phosphothreonine modification is found at threonine 189. At serine 191 the chain carries Phosphoserine. A C2H2-type 1 zinc finger spans residues 289–311; it reads NICGICGKSFGRGSTLIQHQRIH. At threonine 312 the chain carries Phosphothreonine. Residue tyrosine 317 is modified to Phosphotyrosine. C2H2-type zinc fingers lie at residues 317 to 339, 345 to 367, 373 to 395, and 401 to 423; these read YKCEVCSKAFSQSSDLIKHQRTH, YKCPRCGKAFADSSYLLRHQRTH, YKCPHCGKAFGDSSYLLRHQRTH, and YSCPECGKCYSQNSSLRSHQRVH. Phosphoserine is present on residues serine 323 and serine 327. The residue at position 424 (threonine 424) is a Phosphothreonine. 5 C2H2-type zinc fingers span residues 429-451, 457-479, 485-507, 513-535, and 541-563; these read FSCGICGKSFSQRSALIPHARSH, FKCPECGKRFGQSSVLAIHARTH, YSCPDCGKTFNRSSTLIQHQRSH, YRCAVCGKGFCRSSTLLQHHRVH, and YKCDDCGKAFSQSSDLIRHQRTH. Residue serine 470 is modified to Phosphoserine.

It belongs to the krueppel C2H2-type zinc-finger protein family. In terms of assembly, interacts (via zinc-finger domains) with TP53 (via N-terminus); interaction might be facilitated by TP53 oligomerization state. Interacts with ELP3. May be phosphorylated at residue 'Ser-5' of the tandem heptapeptide repeats in the N-terminus. Phosphorylation might be increased upon RAS pathway activation and negatively regulate protein stability.

The protein resides in the nucleus. Its subcellular location is the chromosome. Its function is as follows. Binds to mammalian-wide interspersed repeat (MIRs) sequences in euchromatin and promoter regions of genes at the consensus sequence 5'-GCTGTGTG-[N20]-CCTCTCTG-3', consisting of two anchor regions connected by a linker region; the linker region probably does not contribute to the binding specificity. Required for cell homeostasis. May be involved in transcriptional regulation. This Mus musculus (Mouse) protein is Zinc finger protein 768 (Znf768).